The sequence spans 288 residues: Light-independent protochlorophyllide reductase iron-sulfur ATP-binding protein (288 aa).

Residues 12 to 17 and Lys-41 contribute to the ATP site; that span reads GIGKST. Ser-16 lines the Mg(2+) pocket. Positions 97 and 131 each coordinate [4Fe-4S] cluster. 182–183 provides a ligand contact to ATP; sequence NR.

It belongs to the NifH/BchL/ChlL family. In terms of assembly, homodimer. Protochlorophyllide reductase is composed of three subunits; ChlL, ChlN and ChlB. It depends on [4Fe-4S] cluster as a cofactor.

It catalyses the reaction chlorophyllide a + oxidized 2[4Fe-4S]-[ferredoxin] + 2 ADP + 2 phosphate = protochlorophyllide a + reduced 2[4Fe-4S]-[ferredoxin] + 2 ATP + 2 H2O. It participates in porphyrin-containing compound metabolism; chlorophyll biosynthesis (light-independent). Its function is as follows. Component of the dark-operative protochlorophyllide reductase (DPOR) that uses Mg-ATP and reduced ferredoxin to reduce ring D of protochlorophyllide (Pchlide) to form chlorophyllide a (Chlide). This reaction is light-independent. The L component serves as a unique electron donor to the NB-component of the complex, and binds Mg-ATP. The polypeptide is Light-independent protochlorophyllide reductase iron-sulfur ATP-binding protein (Picosynechococcus sp. (strain ATCC 27264 / PCC 7002 / PR-6) (Agmenellum quadruplicatum)).